Consider the following 167-residue polypeptide: Ribosome maturation factor RimP (167 aa).

It belongs to the RimP family.

The protein resides in the cytoplasm. Its function is as follows. Required for maturation of 30S ribosomal subunits. The chain is Ribosome maturation factor RimP from Cytophaga hutchinsonii (strain ATCC 33406 / DSM 1761 / CIP 103989 / NBRC 15051 / NCIMB 9469 / D465).